The following is a 505-amino-acid chain: Probable alpha-L-arabinofuranosidase C (505 aa).

4 N-linked (GlcNAc...) asparagine glycosylation sites follow: asparagine 81, asparagine 152, asparagine 269, and asparagine 438.

The protein belongs to the glycosyl hydrolase 51 family.

Its subcellular location is the secreted. It carries out the reaction Hydrolysis of terminal non-reducing alpha-L-arabinofuranoside residues in alpha-L-arabinosides.. The protein operates within glycan metabolism; L-arabinan degradation. In terms of biological role, alpha-L-arabinofuranosidase involved in the degradation of arabinoxylan, a major component of plant hemicellulose. Acts only on small linear 1,5-alpha-linked L-arabinofuranosyl oligosaccharides. This chain is Probable alpha-L-arabinofuranosidase C (abfC), found in Aspergillus fumigatus (strain ATCC MYA-4609 / CBS 101355 / FGSC A1100 / Af293) (Neosartorya fumigata).